The primary structure comprises 193 residues: WYSSMFAANIKQEPISHHHHHHHAHHSHHQHSHDSNSNSNASSPHQSPLPSPNPPSSNNLQLEQYLKQQQQQQQQQQPMDTLCAGAMTPSPSNNDQNSRLRPPGLPNPMQTIMPANMRPSPTATTTATTTAAAASTTTAATVALQSNDKLQALTPPMDVTPPKSPAKSQQSCAEPEKEHDLMSNSSEDMKYMA.

Disordered regions lie at residues serine 16–threonine 126 and serine 146–alanine 193. Basic residues predominate over residues histidine 17–histidine 31. Composition is skewed to low complexity over residues serine 35–glutamine 46 and serine 56–glutamine 77. A compositionally biased stretch (polar residues) spans proline 89 to arginine 99. Over residues glutamate 174–alanine 193 the composition is skewed to basic and acidic residues.

The protein belongs to the hunchback C2H2-type zinc-finger protein family.

It is found in the nucleus. Its function is as follows. Gap class segmentation protein that controls development of head structures. This chain is Protein hunchback (hb), found in Drosophila iki (Fruit fly).